The primary structure comprises 61 residues: Small ribosomal subunit protein uS14 (61 aa).

Positions 24, 27, 40, and 43 each coordinate Zn(2+).

It belongs to the universal ribosomal protein uS14 family. Zinc-binding uS14 subfamily. Part of the 30S ribosomal subunit. Contacts proteins S3 and S10. Requires Zn(2+) as cofactor.

In terms of biological role, binds 16S rRNA, required for the assembly of 30S particles and may also be responsible for determining the conformation of the 16S rRNA at the A site. The protein is Small ribosomal subunit protein uS14 of Staphylococcus aureus (strain USA300 / TCH1516).